We begin with the raw amino-acid sequence, 358 residues long: NADH-quinone oxidoreductase subunit H (358 aa).

A run of 8 helical transmembrane segments spans residues 20–40 (ITVG…IPLI), 95–115 (ALFY…WAVI), 128–148 (IGLL…IIAG), 168–188 (ISYE…SGSM), 206–226 (VFSW…ISAV), 253–273 (GFAF…ISAL), 290–310 (WGFI…AVLY), and 334–354 (VLIP…ISPL).

Belongs to the complex I subunit 1 family. As to quaternary structure, NDH-1 is composed of 14 different subunits. Subunits NuoA, H, J, K, L, M, N constitute the membrane sector of the complex.

Its subcellular location is the cell inner membrane. The catalysed reaction is a quinone + NADH + 5 H(+)(in) = a quinol + NAD(+) + 4 H(+)(out). Its function is as follows. NDH-1 shuttles electrons from NADH, via FMN and iron-sulfur (Fe-S) centers, to quinones in the respiratory chain. The immediate electron acceptor for the enzyme in this species is believed to be ubiquinone. Couples the redox reaction to proton translocation (for every two electrons transferred, four hydrogen ions are translocated across the cytoplasmic membrane), and thus conserves the redox energy in a proton gradient. This subunit may bind ubiquinone. The chain is NADH-quinone oxidoreductase subunit H from Neisseria meningitidis serogroup A / serotype 4A (strain DSM 15465 / Z2491).